Here is a 195-residue protein sequence, read N- to C-terminus: MTVERLENGVIVQRNTNEIEISITLDTVHGKLEGSTGVNFFDHLLNTFCHYSGLGLRVSTCESKDGILHHLIEDFGISLGLAFRELFDYTKVRRFGEATVPMNEALVGCYVDLSGRPFFQKNFEFSVEKIEDMPVEGFEEFMCGFVNHARITVHFFKFFGKNDHHISESAMKSFGLAIAKALESSEKKTTKGVID.

It belongs to the imidazoleglycerol-phosphate dehydratase family.

Its subcellular location is the cytoplasm. The enzyme catalyses D-erythro-1-(imidazol-4-yl)glycerol 3-phosphate = 3-(imidazol-4-yl)-2-oxopropyl phosphate + H2O. It functions in the pathway amino-acid biosynthesis; L-histidine biosynthesis; L-histidine from 5-phospho-alpha-D-ribose 1-diphosphate: step 6/9. The protein is Imidazoleglycerol-phosphate dehydratase of Thermotoga maritima (strain ATCC 43589 / DSM 3109 / JCM 10099 / NBRC 100826 / MSB8).